Reading from the N-terminus, the 132-residue chain is Ubiquinol-cytochrome c reductase complex assembly factor 4 (132 aa).

A signal peptide spans 1–15 (MNRVLCAPAAGAVRA). Residues 16-78 (LRLIGRTSRS…GKGHQRPWWK (63 aa)) are Mitochondrial matrix-facing. Residues 24 to 73 (RSLHPLPGSRDRAHPAAEEQDDPDRPTEFSSSKANPRRWSVGHSMGKGHQ) are disordered. Over residues 32–50 (SRDRAHPAAEEQDDPDRPT) the composition is skewed to basic and acidic residues. Residues 79-95 (VLPLSCFLVALIIWCYL) form a helical membrane-spanning segment. At 96 to 132 (REESEADQWLRQVWGEVPEPSDRSEEPETPAAYRART) the chain is on the mitochondrial intermembrane side. The segment at 110-132 (GEVPEPSDRSEEPETPAAYRART) is disordered.

This sequence belongs to the UQCC4 family. As to quaternary structure, forms a complex, named COMB/coordinator of mitochondrial CYTB biogenesis, composed of UQCC1, UQCC2, UQCC4, UQCC5 and UQCC6; stabilizes nascent cytochrome b/MT-CYB and promotes its membrane insertion. Forms a complex, named COMA, composed of UQCC1, UQCC2 and UQCC4; activates MT-CYB translation. Forms a complex, named COMC, composed of UQCC1, UQCC2; UQCC3 and UQCC4; mediates MT-CYB hemylation and association with the first nuclear-encoded complex III subunit UQCRQ. Complexes COMA and COMB are bound to the mitochondrion inner membrane by UQCC4.

Its subcellular location is the mitochondrion inner membrane. Its function is as follows. Required for the assembly and stability of the mitochondrial ubiquinol-cytochrome c reductase complex (complex III (CIII) or cytochrome b-c1 complex), a multisubunit transmembrane complex that is part of the mitochondrial electron transport chain (ETC) which drives oxidative phosphorylation. The polypeptide is Ubiquinol-cytochrome c reductase complex assembly factor 4 (UQCC4) (Pongo abelii (Sumatran orangutan)).